We begin with the raw amino-acid sequence, 213 residues long: Probable nicotinate-nucleotide adenylyltransferase (213 aa).

The protein belongs to the NadD family.

It carries out the reaction nicotinate beta-D-ribonucleotide + ATP + H(+) = deamido-NAD(+) + diphosphate. Its pathway is cofactor biosynthesis; NAD(+) biosynthesis; deamido-NAD(+) from nicotinate D-ribonucleotide: step 1/1. In terms of biological role, catalyzes the reversible adenylation of nicotinate mononucleotide (NaMN) to nicotinic acid adenine dinucleotide (NaAD). The protein is Probable nicotinate-nucleotide adenylyltransferase of Pectobacterium atrosepticum (strain SCRI 1043 / ATCC BAA-672) (Erwinia carotovora subsp. atroseptica).